Reading from the N-terminus, the 593-residue chain is Bifunctional lycopene cyclase/phytoene synthase (593 aa).

The lycopene beta-cyclase stretch occupies residues 1 to 242 (MAYDYALVHL…IVFGMAVFDQ (242 aa)). 7 consecutive transmembrane segments (helical) span residues 8–28 (VHLK…YPIF), 31–51 (IHFL…LPWD), 77–97 (IEEL…YILL), 117–136 (IARG…LYGV), 147–167 (YLGL…TVAG), 169–189 (FILT…TVYL), and 231–251 (ILIV…FAFP). The segment at 249–593 (AFPHLFPKVP…KTVLKALFSA (345 aa)) is phytoene synthase.

This sequence in the N-terminal section; belongs to the lycopene beta-cyclase family. The protein in the C-terminal section; belongs to the phytoene/squalene synthase family.

It is found in the membrane. The catalysed reaction is all-trans-lycopene = gamma-carotene. The enzyme catalyses gamma-carotene = all-trans-beta-carotene. It carries out the reaction 2 (2E,6E,10E)-geranylgeranyl diphosphate = 15-cis-phytoene + 2 diphosphate. The protein operates within carotenoid biosynthesis; beta-carotene biosynthesis. It participates in carotenoid biosynthesis; phytoene biosynthesis; all-trans-phytoene from geranylgeranyl diphosphate: step 1/1. Bifunctional enzyme that catalyzes the reactions from geranylgeranyl diphosphate to phytoene (phytoene synthase) and lycopene to beta-carotene via the intermediate gamma-carotene (lycopene cyclase). In Podospora anserina (strain S / ATCC MYA-4624 / DSM 980 / FGSC 10383) (Pleurage anserina), this protein is Bifunctional lycopene cyclase/phytoene synthase.